A 344-amino-acid chain; its full sequence is MVQVGVIGGTGYVGAELIRLLSNHNKIKISGISSTSYEGKSINSLYPGFYDLKELVCEKDDEVIKRSDLIFLALPSGVSEPIVEKAVAKDKICIDMGADFRFKNESSYKKWYGKNFITPKLHESSVYGLPELNREYIKKSRVIGNPGCYATSVQIGVLPLISKGLIEEKGIIADCKSGLTGAGKTLSESSHFVNCNESFSAYKVANHRHTPEIEENLNSVSKEGVKLTFIPHLIPINRGILSTIYTTPKDPIDIEKIHQKYCEFYKEEPFVRILPLGKVSKINNVRLSNYCCISIHYDSENNKLIIISCLDNMIKGAAGQAIQNMNIVLGFDEKEGLTALPAVF.

Cys-148 is an active-site residue.

This sequence belongs to the NAGSA dehydrogenase family. Type 1 subfamily.

It localises to the cytoplasm. It carries out the reaction N-acetyl-L-glutamate 5-semialdehyde + phosphate + NADP(+) = N-acetyl-L-glutamyl 5-phosphate + NADPH + H(+). It participates in amino-acid biosynthesis; L-arginine biosynthesis; N(2)-acetyl-L-ornithine from L-glutamate: step 3/4. In terms of biological role, catalyzes the NADPH-dependent reduction of N-acetyl-5-glutamyl phosphate to yield N-acetyl-L-glutamate 5-semialdehyde. The sequence is that of N-acetyl-gamma-glutamyl-phosphate reductase from Clostridium kluyveri (strain NBRC 12016).